Reading from the N-terminus, the 1052-residue chain is Germline survival defective-1 (1052 aa).

The first 25 residues, 1 to 25 (MRCLISYLFHSFLIFLKFIRSDVTA), serve as a signal peptide directing secretion. Disordered stretches follow at residues 41-320 (LMKS…DPKN), 478-543 (VNGI…QSVP), 667-689 (PSSQAVGDENDTDSDHESEEEFE), 933-965 (KQTLLSKKGDHRTRSDGEGSQQNGGTSSSNSYA), and 1033-1052 (SNNTGGVNGNSGGGNQNSNF). Over residues 67 to 145 (ATATAAATTQ…SSTSSTSQQT (79 aa)) the composition is skewed to low complexity. A compositionally biased stretch (polar residues) spans 163-172 (TSNTANSQSG). Positions 178 to 190 (TNKDRPKEKEKNT) are enriched in basic and acidic residues. Residues 244–279 (NAKSSGFLSNSSLSSAGQISASSAPPVSTTPTAIPI) are compositionally biased toward low complexity. The segment covering 305 to 320 (KRDEEPMPYKSTDPKN) has biased composition (basic and acidic residues). The segment at 424-732 (QHPPGLPPLL…QIEKNDNLFS (309 aa)) is gld-4 binding. Residues 480-514 (GISNNIPSDRQQLDSKPNTARGSSGNINQSNTTSP) show a composition bias toward polar residues. Over residues 674–689 (DENDTDSDHESEEEFE) the composition is skewed to acidic residues. Residues 892-1052 (PIELPVNMQP…SGGGNQNSNF (161 aa)) form a gld-3 binding region. Low complexity predominate over residues 950–963 (EGSQQNGGTSSSNS). Residues 1038–1052 (GVNGNSGGGNQNSNF) show a composition bias toward gly residues.

In terms of assembly, isoform C interacts (via C-terminus) with gld-3 isoform A (via C-terminus) in an RNA-independent manner. Isoform C interacts with gld-4. In terms of tissue distribution, expressed in the germline (at protein level). In the early embryo is expressed in all cells, then becomes gradually restricted to the germ cell lineage and enriches in P granules (at protein level). In adult hermaphrodites, is expressed in the mitotic region, accumulates during early stages of meiotic prophase I and is slightly less abundant in maturing oocytes (at protein level).

The protein resides in the cytoplasm. It is found in the cytoplasmic granule. Its function is as follows. Required maternally for germline survival by forming a maternal complex with gld-3. During hermaphrodite development forms a complex with gld-3 which promotes the sperm/oocyte switch freeing the translational repressor fbf to turn off sperm promoting factors. Required for proper oocyte differentiation and oogenic meiotic arrest. Stimulates the enzymatic activity of gld-4 and together they prevent gld-1 mRNA degradation. The sequence is that of Germline survival defective-1 from Caenorhabditis elegans.